A 309-amino-acid polypeptide reads, in one-letter code: MITFLPITFSILIVVIFFIGNFANGFIALINSIEWVKRQKISFAGQILTALAVSRVGLLWVLSLHWYATEFNLAFHSVEVRSTAYNVWVVTNHFSNWLSTSLSMFYLLRIATFSNLIFLHLNRRVKSVILVTLLGPLLFLVCQLFVMNMNQIVRTKEYEGNMTWKIKLKSAMYLSNTTVAMLANFVPLTLTLISFLLLICSLCKHLKKMRVHGKGSQDPSTKVHTKALQIVTSFLLVCAIYFLSIILSVWNSGGLENKPFFMFCQAIKFSYPSTHPFILIWGNKTLKQTFLSVLRNVRYWVKGQKPSSP.

Met1 is a topological domain (extracellular). A helical membrane pass occupies residues 2 to 22 (ITFLPITFSILIVVIFFIGNF). At 23 to 46 (ANGFIALINSIEWVKRQKISFAGQ) the chain is on the cytoplasmic side. Residues 47–67 (ILTALAVSRVGLLWVLSLHWY) traverse the membrane as a helical segment. Topologically, residues 68–86 (ATEFNLAFHSVEVRSTAYN) are extracellular. Residues 87-107 (VWVVTNHFSNWLSTSLSMFYL) traverse the membrane as a helical segment. At 108-126 (LRIATFSNLIFLHLNRRVK) the chain is on the cytoplasmic side. A helical membrane pass occupies residues 127 to 147 (SVILVTLLGPLLFLVCQLFVM). At 148–178 (NMNQIVRTKEYEGNMTWKIKLKSAMYLSNTT) the chain is on the extracellular side. Residues Asn161 and Asn176 are each glycosylated (N-linked (GlcNAc...) asparagine). A helical transmembrane segment spans residues 179-199 (VAMLANFVPLTLTLISFLLLI). At 200-229 (CSLCKHLKKMRVHGKGSQDPSTKVHTKALQ) the chain is on the cytoplasmic side. Residues 230 to 250 (IVTSFLLVCAIYFLSIILSVW) form a helical membrane-spanning segment. The Extracellular portion of the chain corresponds to 251 to 259 (NSGGLENKP). The helical transmembrane segment at 260 to 280 (FFMFCQAIKFSYPSTHPFILI) threads the bilayer. Residues 281 to 309 (WGNKTLKQTFLSVLRNVRYWVKGQKPSSP) are Cytoplasmic-facing.

This sequence belongs to the G-protein coupled receptor T2R family.

The protein resides in the membrane. The protein localises to the cell projection. Its subcellular location is the cilium membrane. Functionally, receptor that may play a role in the perception of bitterness and is gustducin-linked. May play a role in sensing the chemical composition of the gastrointestinal content. The activity of this receptor may stimulate alpha gustducin, mediate PLC-beta-2 activation and lead to the gating of TRPM5. In airway epithelial cells, binding of bitter compounds increases the intracellular calcium ion concentration and stimulates ciliary beat frequency. This is Taste receptor type 2 member 46 (TAS2R46) from Papio hamadryas (Hamadryas baboon).